The following is a 141-amino-acid chain: Lutropin subunit beta (141 aa).

Residues methionine 1–alanine 20 form the signal peptide. 6 disulfide bridges follow: cysteine 29–cysteine 77, cysteine 43–cysteine 92, cysteine 46–cysteine 130, cysteine 54–cysteine 108, cysteine 58–cysteine 110, and cysteine 113–cysteine 120. Asparagine 33 is a glycosylation site (N-linked (GlcNAc...) asparagine).

It belongs to the glycoprotein hormones subunit beta family. Heterodimer of a common alpha chain and a unique beta chain which confers biological specificity to thyrotropin, lutropin, follitropin and gonadotropin.

It is found in the secreted. Its function is as follows. Promotes spermatogenesis and ovulation by stimulating the testes and ovaries to synthesize steroids. The chain is Lutropin subunit beta (LHB) from Ailurus fulgens (Himalayan red panda).